A 141-amino-acid chain; its full sequence is MAKKVTGMIKLQLAAGKASPAPPVGPALGQHGVNIMAFCKEFNEKTAKQAGLIIPVVITVYQDRSFSFILKTPPAAVLIKKAVGIESGSGVPNKTKVAKITKEQLKEIAEMKMPDLNAGSVEAAMRMVAGTARSMGVTVEE.

Belongs to the universal ribosomal protein uL11 family. Part of the ribosomal stalk of the 50S ribosomal subunit. Interacts with L10 and the large rRNA to form the base of the stalk. L10 forms an elongated spine to which L12 dimers bind in a sequential fashion forming a multimeric L10(L12)X complex. In terms of processing, one or more lysine residues are methylated.

In terms of biological role, forms part of the ribosomal stalk which helps the ribosome interact with GTP-bound translation factors. In Clostridium tetani (strain Massachusetts / E88), this protein is Large ribosomal subunit protein uL11.